A 316-amino-acid polypeptide reads, in one-letter code: Biotin synthase (316 aa).

In terms of domain architecture, Radical SAM core spans 39–263 (NAIQCSTLLS…LFPKAYVRLS (225 aa)). [4Fe-4S] cluster is bound by residues Cys-54, Cys-58, and Cys-61. [2Fe-2S] cluster is bound by residues Cys-98, Cys-129, Cys-189, and Arg-261.

This sequence belongs to the radical SAM superfamily. Biotin synthase family. As to quaternary structure, homodimer. Requires [4Fe-4S] cluster as cofactor. [2Fe-2S] cluster is required as a cofactor.

The enzyme catalyses (4R,5S)-dethiobiotin + (sulfur carrier)-SH + 2 reduced [2Fe-2S]-[ferredoxin] + 2 S-adenosyl-L-methionine = (sulfur carrier)-H + biotin + 2 5'-deoxyadenosine + 2 L-methionine + 2 oxidized [2Fe-2S]-[ferredoxin]. The protein operates within cofactor biosynthesis; biotin biosynthesis; biotin from 7,8-diaminononanoate: step 2/2. Its function is as follows. Catalyzes the conversion of dethiobiotin (DTB) to biotin by the insertion of a sulfur atom into dethiobiotin via a radical-based mechanism. This chain is Biotin synthase, found in Acidithiobacillus ferrooxidans (strain ATCC 23270 / DSM 14882 / CIP 104768 / NCIMB 8455) (Ferrobacillus ferrooxidans (strain ATCC 23270)).